Here is a 406-residue protein sequence, read N- to C-terminus: Coiled-coil domain-containing glutamate-rich protein 1 (406 aa).

Disordered regions lie at residues 43-72 (PGAP…QQHG), 138-167 (GRKK…ADVS), 203-244 (QQEK…KETW), and 278-358 (EEEE…EEFH). Basic residues predominate over residues 138–158 (GRKKRWGRRGRGLRHHPRHSY). 2 coiled-coil regions span residues 199 to 225 (EDMR…SGEA) and 274 to 359 (LLVE…EFHL). Basic and acidic residues predominate over residues 203-212 (QQEKVERQQE). Composition is skewed to acidic residues over residues 278–294 (EEEE…DQEV) and 301–349 (SEEE…VLEE).

The protein resides in the nucleus. In terms of biological role, regulator of histone epigenetic modifications and chromatin compaction into the sperm head, required for histone-to-protamine (HTP) transition. HTP is a key event in which somatic histones are first replaced by testis-specific histone variants, then transition proteins (TNPs) are incorporated into the spermatid nucleus, and finally protamines (PRMs) replace the TNPs to promote chromatin condensation. This is Coiled-coil domain-containing glutamate-rich protein 1 (CCER1) from Homo sapiens (Human).